The chain runs to 119 residues: Putative F-box protein At2g39415 (119 aa).

One can recognise an F-box domain in the interval 37–92 (IDSISSLPDVILQQILSSLPTNLAIRTSVLSTRWRHVWSDTPYIYFDGPGTLYRGL).

The polypeptide is Putative F-box protein At2g39415 (Arabidopsis thaliana (Mouse-ear cress)).